The sequence spans 345 residues: Aspartate-semialdehyde dehydrogenase (345 aa).

Residues 11–14 (TGQV) and 39–40 (RS) contribute to the NADP(+) site. Residue Arg-99 coordinates phosphate. Residue Cys-130 is the Acyl-thioester intermediate of the active site. Gln-157 is a substrate binding site. An NADP(+)-binding site is contributed by 160-161 (SG). Residue Lys-227 coordinates phosphate. Arg-249 contributes to the substrate binding site. His-256 acts as the Proton acceptor in catalysis. NADP(+) is bound at residue Asn-325.

The protein belongs to the aspartate-semialdehyde dehydrogenase family. In terms of assembly, homodimer.

The catalysed reaction is L-aspartate 4-semialdehyde + phosphate + NADP(+) = 4-phospho-L-aspartate + NADPH + H(+). The protein operates within amino-acid biosynthesis; L-lysine biosynthesis via DAP pathway; (S)-tetrahydrodipicolinate from L-aspartate: step 2/4. It participates in amino-acid biosynthesis; L-methionine biosynthesis via de novo pathway; L-homoserine from L-aspartate: step 2/3. Its pathway is amino-acid biosynthesis; L-threonine biosynthesis; L-threonine from L-aspartate: step 2/5. Its function is as follows. Catalyzes the NADPH-dependent formation of L-aspartate-semialdehyde (L-ASA) by the reductive dephosphorylation of L-aspartyl-4-phosphate. The protein is Aspartate-semialdehyde dehydrogenase of Mycobacterium bovis (strain ATCC BAA-935 / AF2122/97).